The following is a 320-amino-acid chain: Lipoyl synthase (320 aa).

The span at 1-24 shows a compositional bias: basic and acidic residues; it reads MIGKLVRDLKIPDQRHPEKAHRPD. The interval 1–30 is disordered; sequence MIGKLVRDLKIPDQRHPEKAHRPDNVQPKK. [4Fe-4S] cluster contacts are provided by Cys-60, Cys-65, Cys-71, Cys-86, Cys-90, Cys-93, and Ser-300. Residues 72–289 enclose the Radical SAM core domain; that stretch reads WSQGHATMMI…EKAAYGKGFL (218 aa).

The protein belongs to the radical SAM superfamily. Lipoyl synthase family. The cofactor is [4Fe-4S] cluster.

It is found in the cytoplasm. It catalyses the reaction [[Fe-S] cluster scaffold protein carrying a second [4Fe-4S](2+) cluster] + N(6)-octanoyl-L-lysyl-[protein] + 2 oxidized [2Fe-2S]-[ferredoxin] + 2 S-adenosyl-L-methionine + 4 H(+) = [[Fe-S] cluster scaffold protein] + N(6)-[(R)-dihydrolipoyl]-L-lysyl-[protein] + 4 Fe(3+) + 2 hydrogen sulfide + 2 5'-deoxyadenosine + 2 L-methionine + 2 reduced [2Fe-2S]-[ferredoxin]. The protein operates within protein modification; protein lipoylation via endogenous pathway; protein N(6)-(lipoyl)lysine from octanoyl-[acyl-carrier-protein]: step 2/2. In terms of biological role, catalyzes the radical-mediated insertion of two sulfur atoms into the C-6 and C-8 positions of the octanoyl moiety bound to the lipoyl domains of lipoate-dependent enzymes, thereby converting the octanoylated domains into lipoylated derivatives. The chain is Lipoyl synthase from Cereibacter sphaeroides (strain ATCC 17029 / ATH 2.4.9) (Rhodobacter sphaeroides).